Here is a 263-residue protein sequence, read N- to C-terminus: Esterase mokD (263 aa).

Catalysis depends on charge relay system residues Ser134, Asp208, and His236.

This sequence belongs to the LovG family.

The catalysed reaction is dihydromonacolin L-[lovastatin nonaketide synthase] + H2O = holo-[lovastatin nonaketide synthase] + dihydromonacolin L carboxylate + H(+). The protein operates within polyketide biosynthesis; lovastatin biosynthesis. Functionally, esterase; part of the gene cluster that mediates the biosynthesis of monakolin K, also known as lovastatin, and which acts as a potent competitive inhibitor of HMG-CoA reductase. Monakolin K biosynthesis is performed in two stages. The first stage is catalyzed by the nonaketide synthase mokA, which belongs to type I polyketide synthases and catalyzes the iterative nine-step formation of the polyketide. This PKS stage completed by the action of dehydrogenase mokE, which catalyzes the NADPH-dependent reduction of the unsaturated tetra-, penta- and heptaketide intermediates that arise during the mokA-mediated biosynthesis of the nonaketide chain and leads to dihydromonacolin L. Covalently bound dihydromonacolin L is released from mokA by the mokD esterase. Conversion of dihydromonacolin L into monacolin L and then monacolin J is subsequently performed with the participation of molecular oxygen and P450 monoogygenase mokC. Finally, mokF performs the conversion of monacoline J to monacoline K through the addition of the side-chain diketide moiety (2R)-2-methylbutanoate produced by the diketide synthase mokB. This chain is Esterase mokD, found in Monascus pilosus (Red mold).